Here is a 258-residue protein sequence, read N- to C-terminus: Probable glycerol uptake facilitator protein (258 aa).

The next 2 helical transmembrane spans lie at 11-31 (WWFL…NGAV) and 50-70 (TVAL…NAIF). The NPA 1 signature appears at 77–79 (NPA). A run of 3 helical transmembrane segments spans residues 95–115 (ALIW…AMIA), 152–172 (FLTE…ASHF), and 180–200 (VPPG…FGGA). The NPA 2 motif lies at 206-208 (NPA). Residues 233-253 (WIPVIAPLSAGLVLSIIIGFS) traverse the membrane as a helical segment.

Belongs to the MIP/aquaporin (TC 1.A.8) family.

The protein localises to the cell membrane. The catalysed reaction is glycerol(in) = glycerol(out). Functionally, mediates glycerol diffusion across the cytoplasmic membrane via a pore-type mechanism. The sequence is that of Probable glycerol uptake facilitator protein (glpF) from Mycoplasma genitalium (strain ATCC 33530 / DSM 19775 / NCTC 10195 / G37) (Mycoplasmoides genitalium).